Here is a 75-residue protein sequence, read N- to C-terminus: Small capsomere-interacting protein (75 aa).

This sequence belongs to the herpesviridae small capsomere-interacting protein family. Interacts with the major capsid protein/MCP.

It is found in the virion. The protein localises to the host nucleus. Participates in the assembly of the infectious particles by decorating the outer surface of the capsid shell and thus forming a layer between the capsid and the tegument. Complexes composed of the major capsid protein and small capsomere-interacting protein/SCP assemble together in the host cytoplasm and are translocated to the nucleus, where they accumulate and participate in capsid assembly. The sequence is that of Small capsomere-interacting protein from Homo sapiens (Human).